The sequence spans 313 residues: Homoserine O-succinyltransferase (313 aa).

C142 functions as the Acyl-thioester intermediate in the catalytic mechanism. Positions 163 and 192 each coordinate substrate. H235 serves as the catalytic Proton acceptor. E237 is an active-site residue. R249 is a substrate binding site.

Belongs to the MetA family.

The protein localises to the cytoplasm. It catalyses the reaction L-homoserine + succinyl-CoA = O-succinyl-L-homoserine + CoA. It functions in the pathway amino-acid biosynthesis; L-methionine biosynthesis via de novo pathway; O-succinyl-L-homoserine from L-homoserine: step 1/1. Its function is as follows. Transfers a succinyl group from succinyl-CoA to L-homoserine, forming succinyl-L-homoserine. The chain is Homoserine O-succinyltransferase from Shewanella baltica (strain OS195).